The sequence spans 665 residues: MQNSHMEEYRNSDNGSTGNSSEVAVVEHPDFSTEIMNVTEMEQSPDASPSAHASTEENEMANAVNLPVTEAEGDFPPEFEKFWKTVEMNPQDFTGWVYLLQYVEQENHLMAARKAFDKFFVHYPYCYGYWKKYADLEKRHDNIKQSDEVYRRGLQAIPLSVDLWIHYINFLKETLEPGDQETNTTIRGTFEHAVLAAGTDFRSDKLWEMYINWENEQGNLREVTAVYDRILGIPTQLYSHHFQRFKEHVQNNLPRDLLTGEQFIQLRRELASVNGHSGDDGPPGDDLPSGIEDISPAKLITEIENMRHRIIEIHQEMFNYNEHEVSKRWTFEEGIKRPYFHVKPLEKAQPKKNWKEYLEFEIENGTHERVVVLFERCVISCALYEEFWIKYAKYMENHSIEGVRHVFSRACTVHLPKKPMAHMLWAAFEEQQGNINEARIILRTFEECVLGLAMVRLRRVSLERRHGNMEEAEHLLQDAIKNAKSNNESSFYAIKLARHLFKIQKNLPKSRKVLLEAIEKDKENTKLYLNLLEMEYSCDLKQNEENILNCFDKAIHGSLPIKMRITFSQRKVEFLEDFGSDVNKLLNAYDEHQTLLKEQDTLKRKAENGSEEPEEKKAHTEDLSSAQIIDGDLQANQAAYNYSAWYQYNYQNPWNYGQYYPPPPT.

A compositionally biased stretch (basic and acidic residues) spans M1–N11. Residues M1 to H28 are disordered. A compositionally biased stretch (polar residues) spans S12–E22. At S44 the chain carries Phosphoserine. HAT repeat units follow at residues N107–R139, D141–E173, E181–E216, G218–N251, F331–E363, G365–N397, and G402–N434. A compositionally biased stretch (basic and acidic residues) spans Q599–D622. The interval Q599–S625 is disordered.

Belongs to the PRP39 family.

The protein resides in the nucleus. Functionally, involved in pre-mRNA splicing. The chain is Pre-mRNA-processing factor 39 (Prpf39) from Mus musculus (Mouse).